We begin with the raw amino-acid sequence, 206 residues long: MEEPPLREEEEEEEEDEAGPEGALGKSPLQLTAEDVYDISYVMGRELMALGSDPRVTQLQFKIVRVLEMLETLVNEGNLTVEELRMERDNLRKEVEGLRREGSAAGPEVNLGPDKMVVDLTDPNRPRFTLQELRDVLQERNKLKSQLLVVQEELQCYKSGLIPPREGPGGRREKEALFPRGSNANSNKEEKTIIRKLFSFRSGKQT.

The disordered stretch occupies residues 1–29 (MEEPPLREEEEEEEEDEAGPEGALGKSPL). Over residues 8-19 (EEEEEEEEDEAG) the composition is skewed to acidic residues. The 90-residue stretch at 19-108 (GPEGALGKSP…RREGSAAGPE (90 aa)) folds into the RH1 domain. Residues 67-159 (LEMLETLVNE…VQEELQCYKS (93 aa)) adopt a coiled-coil conformation. The RH2 domain occupies 125–197 (RPRFTLQELR…KEEKTIIRKL (73 aa)). The disordered stretch occupies residues 161 to 189 (LIPPREGPGGRREKEALFPRGSNANSNKE). A compositionally biased stretch (basic and acidic residues) spans 168-177 (PGGRREKEAL).

It belongs to the RILPL family. In terms of assembly, homodimer. Interacts with RAC1. Interacts (via N-terminus) with MYO5A, the interaction is required for its role in dendrite formation. Interacts with RAB8A; interaction is dependent on the phosphorylation of RAB8A on 'Thr-72'. Interacts with RAB10 and RAB12; interaction is dependent on the phosphorylation of 'Thr-73' on RAB10 and 'Ser-105' on RAB12.

The protein localises to the cytoplasm. Its subcellular location is the cytosol. It localises to the cytoskeleton. It is found in the microtubule organizing center. The protein resides in the centrosome. The protein localises to the cell projection. Its subcellular location is the cilium. Involved in cell shape and neuronal morphogenesis, positively regulating the establishment and maintenance of dendritic spines. Plays a role in cellular protein transport, including protein transport away from primary cilia. May function via activation of RAC1 and PAK1. The protein is RILP-like protein 2 (RILPL2) of Bos taurus (Bovine).